The primary structure comprises 400 residues: NADH-quinone oxidoreductase subunit D (400 aa).

This sequence belongs to the complex I 49 kDa subunit family. NDH-1 is composed of 14 different subunits. Subunits NuoB, C, D, E, F, and G constitute the peripheral sector of the complex.

The protein resides in the cell inner membrane. It catalyses the reaction a quinone + NADH + 5 H(+)(in) = a quinol + NAD(+) + 4 H(+)(out). NDH-1 shuttles electrons from NADH, via FMN and iron-sulfur (Fe-S) centers, to quinones in the respiratory chain. The immediate electron acceptor for the enzyme in this species is believed to be ubiquinone. Couples the redox reaction to proton translocation (for every two electrons transferred, four hydrogen ions are translocated across the cytoplasmic membrane), and thus conserves the redox energy in a proton gradient. This chain is NADH-quinone oxidoreductase subunit D, found in Granulibacter bethesdensis (strain ATCC BAA-1260 / CGDNIH1).